Consider the following 398-residue polypeptide: Succinate--CoA ligase [ADP-forming] subunit beta (398 aa).

Residues 9–253 (KEILNSFGVR…VREENATEVE (245 aa)) form the ATP-grasp domain. Residues Lys50, 57 to 59 (GRG), Val106, and Glu116 each bind ATP. Mg(2+) contacts are provided by Asn208 and Asp222. Residues Asn273 and 330 to 332 (GIV) contribute to the substrate site.

The protein belongs to the succinate/malate CoA ligase beta subunit family. Heterotetramer of two alpha and two beta subunits. It depends on Mg(2+) as a cofactor.

The catalysed reaction is succinate + ATP + CoA = succinyl-CoA + ADP + phosphate. It carries out the reaction GTP + succinate + CoA = succinyl-CoA + GDP + phosphate. Its pathway is carbohydrate metabolism; tricarboxylic acid cycle; succinate from succinyl-CoA (ligase route): step 1/1. Succinyl-CoA synthetase functions in the citric acid cycle (TCA), coupling the hydrolysis of succinyl-CoA to the synthesis of either ATP or GTP and thus represents the only step of substrate-level phosphorylation in the TCA. The beta subunit provides nucleotide specificity of the enzyme and binds the substrate succinate, while the binding sites for coenzyme A and phosphate are found in the alpha subunit. The polypeptide is Succinate--CoA ligase [ADP-forming] subunit beta (Christiangramia forsetii (strain DSM 17595 / CGMCC 1.15422 / KT0803) (Gramella forsetii)).